Reading from the N-terminus, the 370-residue chain is Peptide chain release factor 1 (370 aa).

Glutamine 231 bears the N5-methylglutamine mark. Basic and acidic residues predominate over residues 284 to 293; sequence AREERERETR. Residues 284–303 are disordered; sequence AREERERETRAAQVGTGERS.

This sequence belongs to the prokaryotic/mitochondrial release factor family. Methylated by PrmC. Methylation increases the termination efficiency of RF1.

Its subcellular location is the cytoplasm. Peptide chain release factor 1 directs the termination of translation in response to the peptide chain termination codons UAG and UAA. This is Peptide chain release factor 1 from Deinococcus geothermalis (strain DSM 11300 / CIP 105573 / AG-3a).